Reading from the N-terminus, the 168-residue chain is MNINDKIGIYPGTFDPITFGHLDIIKRACKLVDKLIIGVAENVNKHTAFDTKLRTSMAENEIKGLGIDADVISFNGLLVKFAKEQNASVIIRGLRAVSDFDYEFQMSWVNYKLLPEIETIFLPASEDTQFISSGFVKEIARLGEDVSKFVSKGVQNELINLNRIKNGE.

Residue Thr13 coordinates substrate. ATP contacts are provided by residues 13–14 (TF) and His21. The substrate site is built by Lys45, Leu78, and Arg92. ATP is bound by residues 93 to 95 (GLR), Glu103, and 128 to 134 (TQFISSG).

Belongs to the bacterial CoaD family. In terms of assembly, homohexamer. Mg(2+) is required as a cofactor.

The protein resides in the cytoplasm. The enzyme catalyses (R)-4'-phosphopantetheine + ATP + H(+) = 3'-dephospho-CoA + diphosphate. It functions in the pathway cofactor biosynthesis; coenzyme A biosynthesis; CoA from (R)-pantothenate: step 4/5. Reversibly transfers an adenylyl group from ATP to 4'-phosphopantetheine, yielding dephospho-CoA (dPCoA) and pyrophosphate. The protein is Phosphopantetheine adenylyltransferase of Wolbachia sp. subsp. Drosophila simulans (strain wRi).